A 675-amino-acid chain; its full sequence is UvrABC system protein B (675 aa).

The Helicase ATP-binding domain maps to 35–192; sequence QGMRDGLMYQ…ARLVAMQYTR (158 aa). 48-55 lines the ATP pocket; sequence GVTGSGKT. The short motif at 101–124 is the Beta-hairpin element; sequence YYDYYQPEAYVPTRDLFIEKDSSI. A Helicase C-terminal domain is found at 439 to 605; it reads QVDDLLGEIK…GVNKAVRELI (167 aa). Residues 633–668 form the UVR domain; the sequence is AREIRRLEKLMTDHARNLEFEQAAAARDALNALKQR.

This sequence belongs to the UvrB family. As to quaternary structure, forms a heterotetramer with UvrA during the search for lesions. Interacts with UvrC in an incision complex.

It is found in the cytoplasm. The UvrABC repair system catalyzes the recognition and processing of DNA lesions. A damage recognition complex composed of 2 UvrA and 2 UvrB subunits scans DNA for abnormalities. Upon binding of the UvrA(2)B(2) complex to a putative damaged site, the DNA wraps around one UvrB monomer. DNA wrap is dependent on ATP binding by UvrB and probably causes local melting of the DNA helix, facilitating insertion of UvrB beta-hairpin between the DNA strands. Then UvrB probes one DNA strand for the presence of a lesion. If a lesion is found the UvrA subunits dissociate and the UvrB-DNA preincision complex is formed. This complex is subsequently bound by UvrC and the second UvrB is released. If no lesion is found, the DNA wraps around the other UvrB subunit that will check the other stand for damage. The sequence is that of UvrABC system protein B from Bordetella petrii (strain ATCC BAA-461 / DSM 12804 / CCUG 43448).